A 230-amino-acid chain; its full sequence is Ribonuclease 3 (230 aa).

Residues 5 to 125 enclose the RNase III domain; that stretch reads YSRFYNILGY…VIGAIYLDSD (121 aa). Glu-40 contributes to the Mg(2+) binding site. Asp-44 is a catalytic residue. Asp-111 and Glu-114 together coordinate Mg(2+). Glu-114 is an active-site residue. A DRBM domain is found at 153–223; sequence DSKSKLQEIL…AEKMIEMLSQ (71 aa).

It belongs to the ribonuclease III family. As to quaternary structure, homodimer. Requires Mg(2+) as cofactor.

The protein resides in the cytoplasm. The enzyme catalyses Endonucleolytic cleavage to 5'-phosphomonoester.. In terms of biological role, digests double-stranded RNA. Involved in the processing of primary rRNA transcript to yield the immediate precursors to the large and small rRNAs (23S and 16S). Also processes some mRNAs, and tRNAs when they are encoded in the rRNA operon. CRISPR (clustered regularly interspaced short palindromic repeat) is an adaptive immune system that provides protection against mobile genetic elements (viruses, transposable elements and conjugative plasmids). CRISPR clusters contain spacers, sequences complementary to antecedent mobile elements, and target invading nucleic acids. CRISPR clusters are transcribed and processed into CRISPR RNA (crRNA). In this organism endogenous ribonuclease 3 and Cas9 are required for correct coprocessing of pre-crRNA and the trans-encoded small RNA (tracrRNA). Cas9, crRNA and tracrRNA are required for cleavage of invading DNA. Complements pre-crRNA and tracrRNA coprocessing defects in an rnc deletion in S.pyogenes strain 370. This chain is Ribonuclease 3, found in Francisella tularensis subsp. novicida (strain U112).